The chain runs to 63 residues: Parvalbumin alpha (63 aa).

EF-hand domains are found at residues 28–38 (IEEEELGLILK) and 39–63 (VLLA…LVSE). Glutamate 29, glutamate 32, aspartate 45, aspartate 47, aspartate 49, lysine 51, and glutamate 56 together coordinate Ca(2+).

Detected in muscle and cutaneous mucus. In the skin, detected in cells in the basal region of the glandular epithelium of the dermal mucus glands (at protein level).

The protein resides in the cytoplasm. It localises to the secreted. In terms of biological role, in muscle, parvalbumin is thought to be involved in relaxation after contraction. It binds two calcium ions. The polypeptide is Parvalbumin alpha (Rana temporaria (European common frog)).